Consider the following 771-residue polypeptide: Myotubularin-related protein 10 (771 aa).

Residues 217–657 (FETYSDWDRE…THIKLWKLCY (441 aa)) enclose the Myotubularin phosphatase domain. A phosphoserine mark is found at serine 603 and serine 745.

Belongs to the protein-tyrosine phosphatase family. Non-receptor class myotubularin subfamily.

This is Myotubularin-related protein 10 (Mtmr10) from Mus musculus (Mouse).